A 540-amino-acid polypeptide reads, in one-letter code: MGGKKFQAMPQLPSTVLDRVFEQARQQPEAIALRRCDGTSALRYRELVAEVGGLAADLRAQSVSRGSRVLVISDNGPETYLSVLACAKLGAIAVMADGNLPIAAIERFCQITDPAAALVAPGSKMASSAVPEALHSIPVIAVDIAAVTRESEHSLDAASLAGNADQGSEDPLAMIFTSGTTGEPKAVLLANRTFFAVPDILQKEGLNWVTWVVGETTYSPLPATHIGGLWWILTCLMHGGLCVTGGENTTSLLEILTTNAVATTCLVPTLLSKLVSELKSANATVPSLRLVGYGGSRAIAADVRFIEATGVRTAQVYGLSETGCTALCLPTDDGSIVKIEAGAVGRPYPGVDVYLAATDGIGPTAPGAGPSASFGTLWIKSPANMLGYWNNPERTAEVLIDGWVNTGDLLERREDGFFYIKGRSSEMIICGGVNIAPDEVDRIAEGVSGVREAACYEIPDEEFGALVGLAVVASAELDESAARALKHTIAARFRRESEPMARPSTIVIVTDIPRTQSGKVMRASLAAAATADKARVVVRG.

Residue T177 coordinates Mg(2+). ATP contacts are provided by I226, V316, and S320. E321 contributes to the Mg(2+) binding site. D408 contacts ATP.

The protein belongs to the ATP-dependent AMP-binding enzyme family. As to quaternary structure, homodimer. It depends on Mg(2+) as a cofactor.

It localises to the cytoplasm. The enzyme catalyses a medium-chain fatty acid + holo-[ACP] + ATP = a medium-chain fatty acyl-[ACP] + AMP + diphosphate. It catalyses the reaction a medium-chain fatty acid + ATP + H(+) = a medium-chain fatty acyl-AMP + diphosphate. It carries out the reaction a medium-chain fatty acyl-AMP + holo-[ACP] = a medium-chain fatty acyl-[ACP] + AMP + H(+). The catalysed reaction is a long-chain fatty acid + holo-[ACP] + ATP = a long-chain fatty acyl-[ACP] + AMP + diphosphate. The enzyme catalyses a long-chain fatty acid + ATP + H(+) = a long-chain fatty acyl-AMP + diphosphate. It catalyses the reaction a long-chain fatty acyl-AMP + holo-[ACP] = a long-chain fatty acyl-[ACP] + AMP + H(+). It carries out the reaction a (2E)-enoyl fatty acid + holo-[ACP] + ATP = a (2E)-enoyl-[ACP] + AMP + diphosphate. The catalysed reaction is a (2E)-enoyl fatty acid + ATP + H(+) = a (2E)-2-fatty-enoyl-AMP + diphosphate. The enzyme catalyses a (2E)-2-fatty-enoyl-AMP + holo-[ACP] = a (2E)-enoyl-[ACP] + AMP + H(+). It catalyses the reaction a (3R)-3-isocyanyl-fatty acid + holo-[ACP] + ATP = a (3R)-3-isocyanyl-fatty acyl-[ACP] + AMP + diphosphate. It carries out the reaction a (3R)-3-isocyanyl-fatty acid + ATP + H(+) = a (3R)-3-isocyanyl-fatty acyl-AMP + diphosphate. The catalysed reaction is a (3R)-3-isocyanyl-fatty acyl-AMP + holo-[ACP] = a (3R)-3-isocyanyl-fatty acyl-[ACP] + AMP + H(+). Its pathway is lipid metabolism; fatty acid metabolism. Functionally, acyl:acyl-carrier protein ligase involved in the biosynthesis of a unique class of isonitrile lipopeptides (INLPs) that seem to function as virulence factors in M.tuberculosis and to play a role in metal acquisition. Catalyzes the activation of medium/long-chain fatty acids as acyl-adenylates (acyl-AMP), which are then transferred to the phosphopantetheine arm of the acyl-carrier protein (ACP) MT0109. Acts twice during the INLP pathway, catalyzing the activation of a (2E)-enoyl fatty acid as well as the corresponding (3R)-3-isocyanyl-fatty acid as acyl-adenylates (acyl-AMP), and then the acyl transfer to the dedicated acyl-carrier protein MT0109. This is Medium/long-chain-fatty-acid--[acyl-carrier-protein] ligase FadD10 (fadD10) from Mycobacterium tuberculosis (strain CDC 1551 / Oshkosh).